The following is a 729-amino-acid chain: Cellulose synthase catalytic subunit [UDP-forming] (729 aa).

Transmembrane regions (helical) follow at residues 30–50 (LATW…VAVP), 110–130 (FILG…LVLG), and 171–191 (TTVL…IHLL). The tract at residues 151 to 244 (LWPSVDVFIP…YVAIFDCDHI (94 aa)) is catalytic subdomain A. The active site involves Asp-193. The substrate site is built by Asp-240 and Asp-242. A catalytic subdomain B region spans residues 321 to 381 (TALEEVGGVA…AQRIRWARGM (61 aa)). The active site involves Asp-337. 5 helical membrane-spanning segments follow: residues 405 to 425 (LNAM…TAPL), 427 to 447 (YLFF…AYAL), 520 to 540 (LFLL…LIYV), 549 to 569 (IWFN…TIAT), and 610 to 630 (MAIM…QIGL). Residues 575–671 (QVRSAHRVPL…QERWLVASTF (97 aa)) form the PilZ domain.

This sequence belongs to the glycosyltransferase 2 family. The cofactor is Mg(2+).

It localises to the cell inner membrane. The enzyme catalyses [(1-&gt;4)-beta-D-glucosyl](n) + UDP-alpha-D-glucose = [(1-&gt;4)-beta-D-glucosyl](n+1) + UDP + H(+). It participates in glycan metabolism; bacterial cellulose biosynthesis. Activated by bis-(3'-5') cyclic diguanylic acid (c-di-GMP). Functionally, catalytic subunit of cellulose synthase. It polymerizes uridine 5'-diphosphate glucose to cellulose, which is produced as an extracellular component for mechanical and chemical protection. The protein is Cellulose synthase catalytic subunit [UDP-forming] (bcsA) of Xanthomonas axonopodis pv. citri (strain 306).